Reading from the N-terminus, the 280-residue chain is F420-dependent methylenetetrahydromethanopterin dehydrogenase (280 aa).

This sequence belongs to the MTD family.

The enzyme catalyses 5,10-methylenetetrahydromethanopterin + oxidized coenzyme F420-(gamma-L-Glu)(n) + 2 H(+) = 5,10-methenyl-5,6,7,8-tetrahydromethanopterin + reduced coenzyme F420-(gamma-L-Glu)(n). It participates in one-carbon metabolism; methanogenesis from CO(2); 5,10-methylene-5,6,7,8-tetrahydromethanopterin from 5,10-methenyl-5,6,7,8-tetrahydromethanopterin (coenzyme F420 route): step 1/1. In terms of biological role, catalyzes the reversible reduction of methenyl-H(4)MPT(+) to methylene-H(4)MPT. This Methanoculleus marisnigri (strain ATCC 35101 / DSM 1498 / JR1) protein is F420-dependent methylenetetrahydromethanopterin dehydrogenase.